The following is a 585-amino-acid chain: A-type ATP synthase subunit A (585 aa).

231–238 is an ATP binding site; that stretch reads GPFGSGKT.

Belongs to the ATPase alpha/beta chains family. As to quaternary structure, has multiple subunits with at least A(3), B(3), C, D, E, F, H, I and proteolipid K(x).

It localises to the cell membrane. It catalyses the reaction ATP + H2O + 4 H(+)(in) = ADP + phosphate + 5 H(+)(out). Its function is as follows. Produces ATP from ADP in the presence of a proton gradient across the membrane. The archaeal alpha chain is a catalytic subunit. In terms of biological role, component of the A-type ATP synthase that produces ATP from ADP in the presence of a proton gradient across the membrane. The A chain is the catalytic subunit. This chain is A-type ATP synthase subunit A, found in Thermococcus kodakarensis (strain ATCC BAA-918 / JCM 12380 / KOD1) (Pyrococcus kodakaraensis (strain KOD1)).